The primary structure comprises 718 residues: Protein ENHANCED DISEASE RESISTANCE 2 (718 aa).

The 108-residue stretch at 3-110 (KVVYEGWMVR…WKEKIESVID (108 aa)) folds into the PH domain. Residues 134-174 (TGRTASSSDHESQFSAAEDEEDSRRSLMRRTTIGNGPPESV) are disordered. In terms of domain architecture, START spans 180–392 (EFDAELANQN…VAGLREWFSQ (213 aa)). The tract at residues 437–483 (RNSLLMDEDSDDDDEFQIAESEQEPETSKPETDVKRPEEEPAHNIDL) is disordered. The segment covering 442–461 (MDEDSDDDDEFQIAESEQEP) has biased composition (acidic residues). Over residues 462 to 479 (ETSKPETDVKRPEEEPAH) the composition is skewed to basic and acidic residues. Residues 664–684 (GVLGLVIGVITSLVVEMAFLV) traverse the membrane as a helical segment.

Expressed ubiquitously in all tissues and organs, including leaves, roots, flowers, stems and siliques.

The protein resides in the endoplasmic reticulum membrane. Its subcellular location is the cell membrane. It localises to the endosome membrane. In terms of biological role, negative regulator of the salicylic acid- (SA-) mediated resistance to pathogens, including the biotrophic powdery mildew pathogens Golovinomyces cichoracearum and Blumeria graminis, and the downy mildew pathogen Hyaloperonospora parasitica, probably by limiting the initiation of cell death and the establishment of the hypersensitive response (HR). Prevents ethylene-induced senescence. Binds to phosphatidylinositol-4-phosphate (PtdIns(4)P) in vitro. The sequence is that of Protein ENHANCED DISEASE RESISTANCE 2 (EDR2) from Arabidopsis thaliana (Mouse-ear cress).